Reading from the N-terminus, the 591-residue chain is L-fucose isomerase (591 aa).

Residues E337 and D361 each act as proton acceptor in the active site. E337, D361, and H528 together coordinate Mn(2+).

It belongs to the L-fucose isomerase family. In terms of assembly, homohexamer. Requires Mn(2+) as cofactor.

The protein localises to the cytoplasm. The enzyme catalyses L-fucose = L-fuculose. It functions in the pathway carbohydrate degradation; L-fucose degradation; L-lactaldehyde and glycerone phosphate from L-fucose: step 1/3. Functionally, converts the aldose L-fucose into the corresponding ketose L-fuculose. The polypeptide is L-fucose isomerase (Shigella dysenteriae serotype 1 (strain Sd197)).